The chain runs to 518 residues: Cytochrome P450 709B3 (518 aa).

A helical transmembrane segment spans residues 3–23; it reads LISTINLLTIVLLLFVVSKIW. Cysteine 465 is a heme binding site.

This sequence belongs to the cytochrome P450 family. It depends on heme as a cofactor. As to expression, highly expressed in rosette leaves and siliques, and at lower levels in flowers.

It localises to the membrane. In terms of biological role, plays a role in abscisic acid (ABA) and salt stress response. May regulate the salt stress response independently of well-characterized pathways. Does not function as cytokinin hydroxylase in yeast heterologous system. The protein is Cytochrome P450 709B3 of Arabidopsis thaliana (Mouse-ear cress).